The following is a 217-amino-acid chain: Translation initiation factor IF-3 (217 aa).

A disordered region spans residues 179-217 (PRKTPLVKKEEKEAAPTKAVRTIPAPPRPTAAKVAAQQA).

Belongs to the IF-3 family. As to quaternary structure, monomer.

The protein resides in the cytoplasm. In terms of biological role, IF-3 binds to the 30S ribosomal subunit and shifts the equilibrium between 70S ribosomes and their 50S and 30S subunits in favor of the free subunits, thus enhancing the availability of 30S subunits on which protein synthesis initiation begins. The chain is Translation initiation factor IF-3 from Parasynechococcus marenigrum (strain WH8102).